We begin with the raw amino-acid sequence, 2873 residues long: Fibrillin-1 (2873 aa).

A signal peptide spans 1–24 (MRRGGLLEVALAFALLLESYTSHG). The propeptide occupies 25–44 (ADANLEAGSLKETRANRAKR). The interval 45-81 (RGGGGHDALKGPNVCGSRYNAYCCPGWKTLPGGNQCI) is fibrillin unique N-terminal (FUN) domain. The N-terminal domain stretch occupies residues 45–452 (RGGGGHDALK…PPRVLPFNVT (408 aa)). Disulfide bonds link cysteine 59–cysteine 68, cysteine 67–cysteine 80, cysteine 85–cysteine 94, cysteine 89–cysteine 100, cysteine 102–cysteine 111, cysteine 119–cysteine 129, cysteine 123–cysteine 134, cysteine 136–cysteine 145, cysteine 150–cysteine 160, cysteine 154–cysteine 166, and cysteine 168–cysteine 177. 3 EGF-like domains span residues 81-112 (IVPICRHSCGDGFCSRPNMCTCPSGQISPSCG), 115-146 (SIQHCSIRCMNGGSCSDDHCLCQKGYIGTHCG), and 147-178 (QPVCESGCLNGGRCVAPNRCACTYGFTGPQCE). An interaction with MFAP4 region spans residues 119 to 329 (CSIRCMNGGS…YTSPDGTRCV (211 aa)). In terms of domain architecture, TB 1 spans 184 to 236 (GPCFTVVSNQMCQGQLSGIVCTKTLCCATVGRAWGHPCEMCPAQPHPCRRGFI). The hybrid domain 1 stretch occupies residues 195 to 221 (CQGQLSGIVCTKTLCCATVGRAWGHPC). In terms of domain architecture, EGF-like 4; calcium-binding spans 246-287 (DVDECQAIPGMCQGGNCINTVGSFECKCPAGHKFNEVSQKCE). 6 cysteine pairs are disulfide-bonded: cysteine 250-cysteine 262, cysteine 257-cysteine 271, cysteine 273-cysteine 286, cysteine 292-cysteine 304, cysteine 299-cysteine 313, and cysteine 315-cysteine 328. Serine 268 carries an O-linked (Glc) serine glycan. One can recognise an EGF-like 5; calcium-binding domain in the interval 288 to 329 (DIDECSTIPGVCDGGECTNTVSSYFCKCPPGFYTSPDGTRCV). The TB 2 domain occupies 334 to 389 (GYCYTALANGRCSNQLPQSITKMQCCCDLGRCWSPGVTVAPEMCPIRSTEDFNKLC). Asparagine 450 carries N-linked (GlcNAc...) asparagine glycosylation. The EGF-like 6 domain occupies 451–491 (VTDYCQLVRYLCQNGRCIPTPGSYRCECNKGFQLDIRGECI). 15 disulfide bridges follow: cysteine 455/cysteine 467, cysteine 462/cysteine 476, cysteine 478/cysteine 490, cysteine 496/cysteine 506, cysteine 501/cysteine 515, cysteine 517/cysteine 530, cysteine 536/cysteine 548, cysteine 543/cysteine 557, cysteine 559/cysteine 572, cysteine 578/cysteine 589, cysteine 584/cysteine 598, cysteine 600/cysteine 613, cysteine 619/cysteine 630, cysteine 625/cysteine 639, and cysteine 641/cysteine 654. O-linked (Glc) serine glycosylation is present at serine 473. An EGF-like 7; calcium-binding domain is found at 492–531 (DVDECEKNPCTGGECINNQGSYTCHCRAGYQSTLTRTECR). The O-linked (Glc) serine glycan is linked to serine 512. In terms of domain architecture, EGF-like 8; calcium-binding spans 532–573 (DIDECLQNGRICNNGRCINTDGSFHCVCNAGFHVTRDGKNCE). Residues 574-614 (DMDECSIRNMCLNGMCINEDGSFKCICKPGFQLASDGRYCK) enclose the EGF-like 9; calcium-binding domain. The EGF-like 10; calcium-binding domain occupies 615-655 (DINECETPGICMNGRCVNTDGSYRCECFPGLAVGLDGRVCV). A TB 3 domain is found at 661–713 (STCYGGYRRGQCVKPLFGAVTKSECCCASTEYAFGEPCQPCPAQNSAEYQALC). An EGF-like 11; calcium-binding domain is found at 725 to 766 (DINECALDPDICPNGICENLRGTYKCICNSGYEVDITGKNCV). Disulfide bonds link cysteine 729–cysteine 741, cysteine 736–cysteine 750, cysteine 752–cysteine 765, cysteine 771–cysteine 783, cysteine 778–cysteine 792, cysteine 794–cysteine 807, cysteine 813–cysteine 823, cysteine 818–cysteine 832, cysteine 834–cysteine 847, cysteine 855–cysteine 877, cysteine 864–cysteine 889, cysteine 878–cysteine 892, cysteine 898–cysteine 910, cysteine 916–cysteine 928, cysteine 923–cysteine 937, and cysteine 939–cysteine 952. The region spanning 767 to 808 (DINECVLNSLLCDNGQCRNTPGSFVCTCPKGFVYKPDLKTCE) is the EGF-like 12; calcium-binding domain. The EGF-like 13; calcium-binding domain maps to 809 to 848 (DIDECESSPCINGVCKNSPGSFICECSPESTLDPTKTICI). The TB 4 domain maps to 853–904 (GTCWQTVIDGRCEININGATLKSECCSSLGAAWGSPCTICQLDPICGKGFSR). Residues 862 to 887 (GRCEININGATLKSECCSSLGAAWGS) are hybrid domain 2. The EGF-like 14; calcium-binding domain maps to 912–953 (DINECEVFPGVCKNGLCVNSRGSFKCECPNGMTLDATGRICL). Positions 958–1010 (ETCFLKYDDEECTLPIAGRHRMDACCCSVGAAWGTEECEECPLRNSREYEELC) constitute a TB 5 domain. Positions 1030–1071 (DINECKMIPSLCTHGKCRNTIGSFKCRCDSGFALDSEERNCT) constitute an EGF-like 15; calcium-binding domain. Intrachain disulfides connect cysteine 1034–cysteine 1046, cysteine 1041–cysteine 1055, cysteine 1057–cysteine 1070, cysteine 1076–cysteine 1088, cysteine 1083–cysteine 1097, cysteine 1099–cysteine 1113, cysteine 1119–cysteine 1131, cysteine 1126–cysteine 1140, cysteine 1142–cysteine 1155, cysteine 1161–cysteine 1173, cysteine 1168–cysteine 1182, cysteine 1184–cysteine 1197, cysteine 1203–cysteine 1214, cysteine 1210–cysteine 1223, cysteine 1225–cysteine 1238, cysteine 1244–cysteine 1256, cysteine 1251–cysteine 1265, cysteine 1267–cysteine 1280, cysteine 1286–cysteine 1298, cysteine 1293–cysteine 1307, cysteine 1309–cysteine 1322, cysteine 1328–cysteine 1341, cysteine 1335–cysteine 1350, cysteine 1352–cysteine 1363, cysteine 1369–cysteine 1382, cysteine 1376–cysteine 1391, cysteine 1393–cysteine 1404, cysteine 1410–cysteine 1422, cysteine 1417–cysteine 1431, cysteine 1433–cysteine 1446, cysteine 1452–cysteine 1463, cysteine 1458–cysteine 1472, cysteine 1474–cysteine 1487, cysteine 1493–cysteine 1504, cysteine 1499–cysteine 1513, cysteine 1515–cysteine 1528, cysteine 1536–cysteine 1564, cysteine 1551–cysteine 1576, cysteine 1565–cysteine 1579, cysteine 1566–cysteine 1591, cysteine 1612–cysteine 1624, cysteine 1619–cysteine 1633, cysteine 1635–cysteine 1648, cysteine 1654–cysteine 1665, cysteine 1660–cysteine 1674, and cysteine 1676–cysteine 1689. A glycan (N-linked (GlcNAc...) asparagine) is linked at asparagine 1069. The 43-residue stretch at 1072–1114 (DIDECRISPDLCGRGQCVNTPGDFECKCDEGYESGFMMMKNCM) folds into the EGF-like 16; calcium-binding domain. The EGF-like 17; calcium-binding domain occupies 1115 to 1156 (DIDECQRDPLLCRGGICHNTEGSYRCECPPGHQLSPNISACI). An O-linked (Glc) serine glycan is attached at serine 1137. A glycan (N-linked (GlcNAc...) asparagine) is linked at asparagine 1151. Residues 1157–1198 (DINECELSANLCPHGRCVNLIGKYQCACNPGYHPTHDRLFCV) enclose the EGF-like 18; calcium-binding domain. In terms of domain architecture, EGF-like 19; calcium-binding spans 1199–1239 (DIDECSIMNGGCETFCTNSDGSYECSCQPGFALMPDQRSCT). Serine 1220 carries an O-linked (Glc) serine glycan. The EGF-like 20; calcium-binding domain maps to 1240-1281 (DIDECEDNPNICDGGQCTNIPGEYRCLCYDGFMASEDMKTCV). An EGF-like 21; calcium-binding domain is found at 1282-1323 (DVNECDLNPNICLSGTCENTKGSFICHCDMGYSGKKGKTGCT). A glycan (O-linked (Glc) serine) is linked at serine 1304. Residues 1324–1364 (DINECEIGAHNCGRHAVCTNTAGSFKCSCSPGWIGDGIKCT) form the EGF-like 22; calcium-binding domain. Residue serine 1347 is glycosylated (O-linked (Glc) serine). An EGF-like 23; calcium-binding domain is found at 1365-1405 (DLDECSNGTHMCSQHADCKNTMGSYRCLCKDGYTGDGFTCT). The N-linked (GlcNAc...) asparagine glycan is linked to asparagine 1371. O-linked (Glc) serine glycosylation occurs at serine 1388. An EGF-like 24; calcium-binding domain is found at 1406–1447 (DLDECSENLNLCGNGQCLNAPGGYRCECDMGFVPSADGKACE). The EGF-like 25; calcium-binding domain maps to 1448–1488 (DIDECSLPNICVFGTCHNLPGLFRCECEIGYELDRSGGNCT). An N-linked (GlcNAc...) asparagine glycan is attached at asparagine 1486. The EGF-like 26; calcium-binding domain occupies 1489 to 1529 (DVNECLDPTTCISGNCVNTPGSYTCDCPPDFELNPTRVGCV). Serine 1510 carries O-linked (Glc) serine glycosylation. The C-terminal domain stretch occupies residues 1530–2733 (DTRSGNCYLD…GYPKRGRKRR (1204 aa)). The region spanning 1534 to 1591 (GNCYLDIRPRGDNGDTACSNEIGVGVSKASCCCSLGKAWGTPCELCPSVNTSEYKILC) is the TB 6 domain. The Cell attachment site signature appears at 1543-1545 (RGD). The N-linked (GlcNAc...) asparagine glycan is linked to asparagine 1583. The EGF-like 27; calcium-binding domain maps to 1608 to 1649 (DIDECQELPGLCQGGKCINTFGSFQCRCPTGYYLNEDTRVCD). Serine 1630 is a glycosylation site (O-linked (Glc) serine). Residues 1650–1690 (DVNECETPGICGPGTCYNTVGNYTCICPPDYMQVNGGNNCM) form the EGF-like 28; calcium-binding domain. A glycan (N-linked (GlcNAc...) asparagine) is linked at asparagine 1671. A TB 7 domain is found at 1695-1750 (SLCYRNYYADNQTCDGELLFNMTKKMCCCSYNIGRAWNKPCEQCPIPSTDEFATLC). N-linked (GlcNAc...) asparagine glycans are attached at residues asparagine 1705 and asparagine 1715. The EGF-like 29; calcium-binding domain maps to 1768-1809 (DIDECREIPGVCENGVCINMVGSFRCECPVGFFYNDKLLVCE). Disulfide bonds link cysteine 1772/cysteine 1784, cysteine 1779/cysteine 1793, cysteine 1795/cysteine 1808, cysteine 1814/cysteine 1826, cysteine 1820/cysteine 1835, cysteine 1837/cysteine 1849, cysteine 1855/cysteine 1867, cysteine 1862/cysteine 1876, cysteine 1878/cysteine 1891, cysteine 1897/cysteine 1907, cysteine 1902/cysteine 1916, cysteine 1918/cysteine 1930, cysteine 1936/cysteine 1949, cysteine 1944/cysteine 1958, cysteine 1960/cysteine 1973, cysteine 1979/cysteine 1991, cysteine 1986/cysteine 2000, cysteine 2002/cysteine 2013, cysteine 2019/cysteine 2031, cysteine 2026/cysteine 2040, cysteine 2042/cysteine 2055, cysteine 2063/cysteine 2085, cysteine 2072/cysteine 2098, cysteine 2086/cysteine 2101, cysteine 2087/cysteine 2113, cysteine 2133/cysteine 2144, cysteine 2139/cysteine 2153, cysteine 2155/cysteine 2166, cysteine 2172/cysteine 2183, cysteine 2178/cysteine 2192, cysteine 2194/cysteine 2206, cysteine 2212/cysteine 2223, cysteine 2219/cysteine 2232, cysteine 2234/cysteine 2247, cysteine 2253/cysteine 2267, cysteine 2260/cysteine 2276, cysteine 2278/cysteine 2291, cysteine 2297/cysteine 2309, cysteine 2304/cysteine 2318, and cysteine 2320/cysteine 2333. The EGF-like 30; calcium-binding domain maps to 1810–1850 (DIDECQNGPVCQRNAECINTAGSYRCDCKPGYRLTSTGQCN). A glycan (O-linked (Glc) serine) is linked at serine 1832. Residues 1851–1892 (DRNECQEIPNICSHGQCIDTVGSFYCLCHTGFKTNVDQTMCL) form the EGF-like 31; calcium-binding domain. Residue serine 1873 is glycosylated (O-linked (Glc) serine). One can recognise an EGF-like 32; calcium-binding domain in the interval 1893–1931 (DINECERDACGNGTCRNTIGSFNCRCNHGFILSHNNDCI). A glycan (N-linked (GlcNAc...) asparagine) is linked at asparagine 1904. O-linked (Glc) serine glycosylation occurs at serine 1913. Positions 1932-1974 (DVDECATGNGNLCRNGQCVNTVGSFQCRCNEGYEVAPDGRTCV) constitute an EGF-like 33; calcium-binding domain. An O-linked (Glc) serine glycan is attached at serine 1955. Residues 1975-2014 (DINECVLDPGKCAPGTCQNLDGSYRCICPPGYSLQNDKCE) enclose the EGF-like 34; calcium-binding domain. Residues 2015-2056 (DIDECVEEPEICALGTCSNTEGSFKCLCPEGFSLSSTGRRCQ) form the EGF-like 35; calcium-binding domain. Serine 2037 is a glycosylation site (O-linked (Glc) serine). The 53-residue stretch at 2061–2113 (SYCYAKFEGGKCSSPKSRNHSKQECCCALKGEGWGDPCELCPTEPDEAFRQIC) folds into the TB 8 domain. N-linked (GlcNAc...) asparagine glycosylation is present at asparagine 2079. One can recognise an EGF-like 36; calcium-binding domain in the interval 2129-2167 (DMDECKEPDVCRHGQCINTDGSYRCECPFGYILEGNECV). Serine 2150 carries an O-linked (Glc) serine glycan. The 40-residue stretch at 2168 to 2207 (DTDECSVGNPCGNGTCKNVIGGFECTCEEGFEPGPMMTCE) folds into the EGF-like 37; calcium-binding domain. Asparagine 2180 is a glycosylation site (N-linked (GlcNAc...) asparagine). The EGF-like 38; calcium-binding domain maps to 2208–2248 (DINECAQNPLLCAFRCVNTYGSYECKCPVGYVLREDRRMCK). Serine 2229 carries O-linked (Glc) serine glycosylation. One can recognise an EGF-like 39; calcium-binding domain in the interval 2249–2292 (DEDECAEGKHDCTEKQMECKNLIGTYMCICGPGYQRRPDGEGCI). The 42-residue stretch at 2293-2334 (DENECQTKPGICENGRCLNTLGSYTCECNDGFTASPTQDECL) folds into the EGF-like 40; calcium-binding domain. Residue serine 2315 is glycosylated (O-linked (Glc) serine). The TB 9 domain maps to 2339 to 2392 (GYCFSEVLQNMCQIGSSNRNPVTKSECCCDGGRGWGPHCEICPFEGTVAYKKLC). An EGF-like 41; calcium-binding domain is found at 2404–2445 (DIDECKVIHDVCRNGECVNDRGSYHCICKTGYTPDITGTACV). 21 disulfide bridges follow: cysteine 2408–cysteine 2420, cysteine 2415–cysteine 2429, cysteine 2431–cysteine 2444, cysteine 2450–cysteine 2461, cysteine 2457–cysteine 2470, cysteine 2472–cysteine 2485, cysteine 2491–cysteine 2502, cysteine 2498–cysteine 2511, cysteine 2513–cysteine 2524, cysteine 2530–cysteine 2543, cysteine 2537–cysteine 2552, cysteine 2554–cysteine 2567, cysteine 2573–cysteine 2583, cysteine 2579–cysteine 2592, cysteine 2594–cysteine 2607, cysteine 2613–cysteine 2624, cysteine 2619–cysteine 2633, cysteine 2635–cysteine 2648, cysteine 2654–cysteine 2665, cysteine 2661–cysteine 2674, and cysteine 2676–cysteine 2688. The region spanning 2446–2486 (DLNECNQAPKPCNFICKNTEGSYQCSCPKGYILQEDGRSCK) is the EGF-like 42; calcium-binding domain. Serine 2467 carries O-linked (Glc) serine glycosylation. Positions 2487–2525 (DLDECATKQHNCQFLCVNTIGGFTCKCPPGFTQHHTACI) constitute an EGF-like 43; calcium-binding domain. Residues 2526–2568 (DNNECTSDINLCGSKGVCQNTPGSFTCECQRGFSLDQSGASCE) enclose the EGF-like 44; calcium-binding domain. Serine 2549 carries O-linked (Glc) serine glycosylation. The region spanning 2569–2608 (DVDECEGNHRCQHGCQNIIGGYRCSCPQGYLQHYQWNQCV) is the EGF-like 45; calcium-binding domain. The EGF-like 46; calcium-binding domain occupies 2609-2649 (DENECLSAHVCGGASCHNTLGSYKCMCPTGFQYEQFSGGCQ). A glycan (O-linked (Glc) serine) is linked at serine 2630. Residues 2650–2689 (DINECGSSQAPCSYGCSNTEGGYLCGCPPGYFRIGQGHCV) form the EGF-like 47; calcium-binding domain. A phosphoserine mark is found at serine 2704, serine 2705, and serine 2711. Positions 2728-2747 (RGRKRRSTNETDASDIQDGS) are disordered. N-linked (GlcNAc...) asparagine glycosylation is found at asparagine 2736, asparagine 2752, and asparagine 2769.

The protein belongs to the fibrillin family. In terms of assembly, interacts with COL16A1. Interacts with integrin alpha-V/beta-3. Interacts with ADAMTS10; this interaction promotes microfibril assembly. Interacts with THSD4; this interaction promotes fibril formation. Interacts (via N-terminal domain) with FBLN2 and FBLN5. Interacts with ELN. Forms a ternary complex with ELN and FBLN2 or FBLN5 and a significant interaction with ELN seen only in the presence of FBLN2 or FBLN5. Interacts (via N-terminal domain) with LTBP2 (via C-terminal domain) in a Ca(+2)-dependent manner. Interacts (via N-terminal domain) with LTBP1 (via C-terminal domain). Interacts with integrins ITGA5:ITGB1, ITGAV:ITGB3 and ITGAV:ITGB6. Interacts (via N-terminal domain) with BMP2, BMP4, BMP7, BMP10 and GDF5. Interacts (via N-terminal domain) with MFAP2 and MFAP5. Interacts with ADAMTSL5. Interacts with MFAP4. Interacts (via N-terminal domain) with TNFSF11 in a Ca(+2)-dependent manner. Interacts (via N-terminal domain) with EFEMP2; this interaction inhibits EFEMP2 binding to LOX and ELN. In terms of processing, cleavage of N- and C-terminus by furin is required for incorporation into the extracellular matrix and assembly into microfibrils. The C-terminus, which corresponds to the Asprosin chain, was initially thought to constitute a propeptide. Fibrillin-1 and Asprosin chains are still linked together during the secretion from cells, but are subsequently separated by furin, an essential step for incorporation of Fibrillin-1 into the nascent microfibrils. Post-translationally, forms intermolecular disulfide bonds either with other fibrillin-1 molecules or with other components of the microfibrils. O-glycosylated on serine residues by POGLUT2 and POGLUT3 which is necessary for efficient protein secretion. Strongly expressed during the first week of osteoblast differentiation. As to expression, secreted by white adipose tissue (at protein level).

It localises to the secreted. The protein localises to the extracellular space. The protein resides in the extracellular matrix. Structural component of the 10-12 nm diameter microfibrils of the extracellular matrix, which conveys both structural and regulatory properties to load-bearing connective tissues. Fibrillin-1-containing microfibrils provide long-term force bearing structural support. In tissues such as the lung, blood vessels and skin, microfibrils form the periphery of the elastic fiber, acting as a scaffold for the deposition of elastin. In addition, microfibrils can occur as elastin-independent networks in tissues such as the ciliary zonule, tendon, cornea and glomerulus where they provide tensile strength and have anchoring roles. Fibrillin-1 also plays a key role in tissue homeostasis through specific interactions with growth factors, such as the bone morphogenetic proteins (BMPs), growth and differentiation factors (GDFs) and latent transforming growth factor-beta-binding proteins (LTBPs), cell-surface integrins and other extracellular matrix protein and proteoglycan components. Regulates osteoblast maturation by controlling TGF-beta bioavailability and calibrating TGF-beta and BMP levels, respectively. Negatively regulates osteoclastogenesis by binding and sequestering an osteoclast differentiation and activation factor TNFSF11. This leads to disruption of TNFSF11-induced Ca(2+) signaling and impairment of TNFSF11-mediated nuclear translocation and activation of transcription factor NFATC1 which regulates genes important for osteoclast differentiation and function. Mediates cell adhesion via its binding to cell surface receptors integrins ITGAV:ITGB3 and ITGA5:ITGB1. Binds heparin and this interaction plays an important role in the assembly of microfibrils. In terms of biological role, adipokine secreted by white adipose tissue that plays an important regulatory role in the glucose metabolism of liver, muscle and pancreas. Hormone that targets the liver in response to fasting to increase plasma glucose levels. Binds the olfactory receptor Olfr734 at the surface of hepatocytes and promotes hepatocyte glucose release by activating the protein kinase A activity in the liver, resulting in rapid glucose release into the circulation. May act as a regulator of adaptive thermogenesis by inhibiting browning and energy consumption, while increasing lipid deposition in white adipose tissue. Also acts as an orexigenic hormone that increases appetite: crosses the blood brain barrier and exerts effects on the hypothalamus. In the arcuate nucleus of the hypothalamus, asprosin directly activates orexigenic AgRP neurons and indirectly inhibits anorexigenic POMC neurons, resulting in appetite stimulation. Activates orexigenic AgRP neurons via binding to the olfactory receptor Olfr734. May also play a role in sperm motility in testis via interaction with Olfr734 receptor. The chain is Fibrillin-1 from Mus musculus (Mouse).